Consider the following 156-residue polypeptide: MKEKRDLKIQAIENGTVIDHIKAGQALNVLRILGISSAFRATISFVMNAPGAAGIKDVVKIEGKELSVEELNRIALISPKATINIIRDFKVVQKNKVVLPSYVEGVVRCINPNCISNSSEPIKSKFSVLQSEEEGVTLNCLYCEHVISENIAENLL.

The Zn(2+) site is built by Cys109, Cys114, Cys140, and Cys143.

Belongs to the PyrI family. As to quaternary structure, contains catalytic and regulatory chains. It depends on Zn(2+) as a cofactor.

In terms of biological role, involved in allosteric regulation of aspartate carbamoyltransferase. The chain is Aspartate carbamoyltransferase regulatory chain from Methanosarcina barkeri (strain Fusaro / DSM 804).